Consider the following 362-residue polypeptide: Protein MGF 360-2L (362 aa).

The protein belongs to the asfivirus MGF 360 family.

Plays a role in virus cell tropism, and may be required for efficient virus replication in macrophages. The sequence is that of Protein MGF 360-2L from African swine fever virus (strain Badajoz 1971 Vero-adapted) (Ba71V).